A 457-amino-acid polypeptide reads, in one-letter code: Subtilisin-like serine protease Pen c 2 (457 aa).

Positions 1 to 16 are cleaved as a signal peptide; the sequence is MKGFLGLALLPLLTAA. Residues 17 to 136 constitute a propeptide, removed in mature form; the sequence is SPVSVESIHN…IEKDSEVHHF (120 aa). The Inhibitor I9 domain maps to 43–134; that stretch reads SYIVVFKKHV…DYIEKDSEVH (92 aa). The Peptidase S8 domain occupies 146–457; sequence PWGLARISHR…YTDIVAQGGY (312 aa). Residues Asp-182 and His-214 each act as charge relay system in the active site. N-linked (GlcNAc...) asparagine glycosylation is found at Asn-244 and Asn-284. Catalysis depends on Ser-380, which acts as the Charge relay system. N-linked (GlcNAc...) asparagine glycosylation occurs at Asn-447.

It belongs to the peptidase S8 family.

Functionally, serine protease. This is Subtilisin-like serine protease Pen c 2 from Penicillium citrinum.